The chain runs to 572 residues: Proline--tRNA ligase (572 aa).

The protein belongs to the class-II aminoacyl-tRNA synthetase family. ProS type 1 subfamily. In terms of assembly, homodimer.

It localises to the cytoplasm. The catalysed reaction is tRNA(Pro) + L-proline + ATP = L-prolyl-tRNA(Pro) + AMP + diphosphate. Catalyzes the attachment of proline to tRNA(Pro) in a two-step reaction: proline is first activated by ATP to form Pro-AMP and then transferred to the acceptor end of tRNA(Pro). As ProRS can inadvertently accommodate and process non-cognate amino acids such as alanine and cysteine, to avoid such errors it has two additional distinct editing activities against alanine. One activity is designated as 'pretransfer' editing and involves the tRNA(Pro)-independent hydrolysis of activated Ala-AMP. The other activity is designated 'posttransfer' editing and involves deacylation of mischarged Ala-tRNA(Pro). The misacylated Cys-tRNA(Pro) is not edited by ProRS. In Escherichia coli O139:H28 (strain E24377A / ETEC), this protein is Proline--tRNA ligase.